Reading from the N-terminus, the 214-residue chain is Charged multivesicular body protein 2b (214 aa).

A coiled-coil region spans residues glutamine 25–lysine 55. Residues alanine 179–aspartate 201 are disordered. Over residues serine 190 to isoleucine 199 the composition is skewed to polar residues. Positions glutamate 202–glycine 212 match the MIT-interacting motif motif.

Belongs to the SNF7 family. Probable core component of the endosomal sorting required for transport complex III (ESCRT-III). ESCRT-III components are thought to multimerize to form a flat lattice on the perimeter membrane of the endosome.

Its subcellular location is the cytoplasm. The protein localises to the cytosol. The protein resides in the late endosome membrane. Functionally, probable core component of the endosomal sorting required for transport complex III (ESCRT-III) which is involved in multivesicular bodies (MVBs) formation and sorting of endosomal cargo proteins into MVBs. MVBs contain intraluminal vesicles (ILVs) that are generated by invagination and scission from the limiting membrane of the endosome and mostly are delivered to lysosomes enabling degradation of membrane proteins, such as stimulated growth factor receptors, lysosomal enzymes and lipids. This chain is Charged multivesicular body protein 2b (CHMP2B), found in Gallus gallus (Chicken).